We begin with the raw amino-acid sequence, 280 residues long: RNA polymerase II holoenzyme cyclin-like subunit (280 aa).

One can recognise a Cyclin N-terminal domain in the interval 23–150 (ERRKGLEDIF…LIEELGTYLV (128 aa)).

The protein belongs to the cyclin family. Cyclin C subfamily. As to quaternary structure, component of the SRB8-11 complex, a regulatory module of the Mediator complex.

The protein resides in the nucleus. Functionally, component of the SRB8-11 complex. The SRB8-11 complex is a regulatory module of the Mediator complex which is itself involved in regulation of basal and activated RNA polymerase II-dependent transcription. The SRB8-11 complex may be involved in the transcriptional repression of a subset of genes regulated by Mediator. It may inhibit the association of the Mediator complex with RNA polymerase II to form the holoenzyme complex. The SRB8-11 complex phosphorylates the C-terminal domain (CTD) of the largest subunit of RNA polymerase II. This Yarrowia lipolytica (strain CLIB 122 / E 150) (Yeast) protein is RNA polymerase II holoenzyme cyclin-like subunit (SSN8).